Here is a 177-residue protein sequence, read N- to C-terminus: Adenine phosphoribosyltransferase (177 aa).

The protein belongs to the purine/pyrimidine phosphoribosyltransferase family. In terms of assembly, homodimer.

The protein resides in the cytoplasm. It carries out the reaction AMP + diphosphate = 5-phospho-alpha-D-ribose 1-diphosphate + adenine. Its pathway is purine metabolism; AMP biosynthesis via salvage pathway; AMP from adenine: step 1/1. Functionally, catalyzes a salvage reaction resulting in the formation of AMP, that is energically less costly than de novo synthesis. In Chlorobaculum tepidum (strain ATCC 49652 / DSM 12025 / NBRC 103806 / TLS) (Chlorobium tepidum), this protein is Adenine phosphoribosyltransferase.